The primary structure comprises 281 residues: 2-C-methyl-D-erythritol 4-phosphate cytidylyltransferase (281 aa).

The protein belongs to the IspD/TarI cytidylyltransferase family. IspD subfamily.

The enzyme catalyses 2-C-methyl-D-erythritol 4-phosphate + CTP + H(+) = 4-CDP-2-C-methyl-D-erythritol + diphosphate. The protein operates within isoprenoid biosynthesis; isopentenyl diphosphate biosynthesis via DXP pathway; isopentenyl diphosphate from 1-deoxy-D-xylulose 5-phosphate: step 2/6. Functionally, catalyzes the formation of 4-diphosphocytidyl-2-C-methyl-D-erythritol from CTP and 2-C-methyl-D-erythritol 4-phosphate (MEP). The polypeptide is 2-C-methyl-D-erythritol 4-phosphate cytidylyltransferase (Psychrobacter arcticus (strain DSM 17307 / VKM B-2377 / 273-4)).